The sequence spans 234 residues: HTH-type transcriptional regulator ArcR (234 aa).

40-129 (VRHYTKGQVI…MAFLCKANDD (90 aa)) is an a nucleoside 3',5'-cyclic phosphate binding site. Residues 155-228 (KFAKDRIIKL…HKNWLVSKHL (74 aa)) form the HTH crp-type domain. Positions 188–207 (IQLMSDMAGISRETAGHIIH) form a DNA-binding region, H-T-H motif.

Its subcellular location is the cytoplasm. In terms of biological role, positively regulates the expression of the arcABDCR operon under anaerobic conditions, thus playing an essential role in arginine catabolism. May also control the expression of genes encoding proteins which are involved in anaerobic metabolism. Can bind cyclic AMP. The chain is HTH-type transcriptional regulator ArcR (arcR) from Staphylococcus aureus (strain USA300 / TCH1516).